The primary structure comprises 444 residues: Guanosine nucleotide diphosphate dissociation inhibitor 2 (444 aa).

The protein belongs to the Rab GDI family. In terms of tissue distribution, expressed in roots and floral buds.

Its function is as follows. Regulates the GDP/GTP exchange reaction of most RAB proteins by inhibiting the dissociation of GDP from them, and the subsequent binding of GTP. The protein is Guanosine nucleotide diphosphate dissociation inhibitor 2 (GDI2) of Arabidopsis thaliana (Mouse-ear cress).